We begin with the raw amino-acid sequence, 324 residues long: tRNA-dihydrouridine(20a/20b) synthase [NAD(P)+]-like (324 aa).

Residues 33–35 (PMV) and Gln-87 each bind FMN. Cys-116 serves as the catalytic Proton donor. FMN is bound by residues Lys-158, His-186, 216–218 (NGD), and 240–241 (AR).

This sequence belongs to the Dus family. Dus4 subfamily. Requires FMN as cofactor.

The catalysed reaction is 5,6-dihydrouridine(20a) in tRNA + NADP(+) = uridine(20a) in tRNA + NADPH + H(+). It carries out the reaction 5,6-dihydrouridine(20a) in tRNA + NAD(+) = uridine(20a) in tRNA + NADH + H(+). It catalyses the reaction 5,6-dihydrouridine(20b) in tRNA + NAD(+) = uridine(20b) in tRNA + NADH + H(+). The enzyme catalyses 5,6-dihydrouridine(20b) in tRNA + NADP(+) = uridine(20b) in tRNA + NADPH + H(+). In terms of biological role, catalyzes the synthesis of dihydrouridine, a modified base found in the D-loop of most tRNAs. The sequence is that of tRNA-dihydrouridine(20a/20b) synthase [NAD(P)+]-like (Dus4l) from Mus musculus (Mouse).